The sequence spans 1439 residues: Gag-Pol polyprotein (1439 aa).

G2 is lipidated: N-myristoyl glycine; by host. Residues 7–31 form an interaction with Gp41 region; the sequence is VLSGGELDRWEKIRLRPGGKKKYRL. An interaction with host CALM1 region spans residues 8–43; the sequence is LSGGELDRWEKIRLRPGGKKKYRLKHIVWASRELER. An interaction with host AP3D1 region spans residues 12-19; that stretch reads ELDRWEKI. The tract at residues 14 to 33 is interaction with membrane phosphatidylinositol 4,5-bisphosphate and RNA; the sequence is DRWEKIRLRPGGKKKYRLKH. The Nuclear export signal signature appears at 16–22; sequence WEKIRLR. Positions 26–32 match the Nuclear localization signal motif; it reads KKKYRLK. An interaction with membrane phosphatidylinositol 4,5-bisphosphate region spans residues 73–77; sequence EELTS. The disordered stretch occupies residues 106–128; sequence EEQTKSMKKAQQAAADTGNSSQV. The residue at position 132 (Y132) is a Phosphotyrosine; by host. The tract at residues 189–227 is interaction with human PPIA/CYPA and NUP153; the sequence is NTVGGHQAAMQMLKETINEEAAEWDRLHPVHAGPIAPGQ. The dimerization/Multimerization of capsid protein p24 stretch occupies residues 277-363; sequence YSPVSILDIR…GGPGHKARVL (87 aa). CCHC-type zinc fingers lie at residues 390–407 and 411–428; these read VKCFNCGKEGHIARNCRA and KGCWKCGKEGHQMKECTE. The dimerization of protease stretch occupies residues 493-497; sequence PQITL. The Peptidase A2 domain occupies 512–581; it reads KEALLDTGAD…TPVNIIGRNL (70 aa). The For protease activity; shared with dimeric partner role is filled by D517. Dimerization of protease regions lie at residues 541–547 and 580–592; these read GIGGFIK and NLLTQIGCTLNFP. In terms of domain architecture, Reverse transcriptase spans 635–825; it reads EGKISKIGPE…PPFLWMGYEL (191 aa). Positions 701, 776, and 777 each coordinate Mg(2+). Residues 818–826 form an RT 'primer grip' region; it reads FLWMGYELH. The Tryptophan repeat motif motif lies at 989 to 1005; the sequence is WETWWTEYWQATWIPEW. The 124-residue stretch at 1025 to 1148 folds into the RNase H type-1 domain; that stretch reads IVGAETFYVD…VDKLVSAGIR (124 aa). Residues D1034, E1069, D1089, and D1140 each contribute to the Mg(2+) site. The segment at 1154–1195 adopts an Integrase-type zinc-finger fold; sequence DGIDKAQEDHEKYHSNWRAMASDFNLPPIVAKEIVASCDKCQ. Positions 1163, 1167, 1191, and 1194 each coordinate Zn(2+). An Integrase catalytic domain is found at 1205–1355; sequence VDCSPGIWQL…SAGERIIDII (151 aa). Mg(2+) is bound by residues D1215, D1267, and E1303. Residues 1374-1421 constitute a DNA-binding region (integrase-type); it reads FRVYYRDNRDPIWKGPAKLLWKGEGAVVIQDNSDIKVVPRRKVKIIRD.

Homotrimer; further assembles as hexamers of trimers. Interacts with gp41 (via C-terminus). Interacts with host CALM1; this interaction induces a conformational change in the Matrix protein, triggering exposure of the myristate group. Interacts with host AP3D1; this interaction allows the polyprotein trafficking to multivesicular bodies during virus assembly. Part of the pre-integration complex (PIC) which is composed of viral genome, matrix protein, Vpr and integrase. As to quaternary structure, homodimer; the homodimer further multimerizes as homohexamers or homopentamers. Interacts with human PPIA/CYPA; This interaction stabilizes the capsid. Interacts with human NUP153. Interacts with host PDZD8; this interaction stabilizes the capsid. Interacts with monkey TRIM5; this interaction destabilizes the capsid. In terms of assembly, homodimer, whose active site consists of two apposed aspartic acid residues. Heterodimer of p66 RT and p51 RT (RT p66/p51). Heterodimerization of RT is essential for DNA polymerase activity. The overall folding of the subdomains is similar in p66 RT and p51 RT but the spatial arrangements of the subdomains are dramatically different. As to quaternary structure, homotetramer; may further associate as a homohexadecamer. Part of the pre-integration complex (PIC) which is composed of viral genome, matrix protein, Vpr and integrase. Interacts with human SMARCB1/INI1 and human PSIP1/LEDGF isoform 1. Interacts with human KPNA3; this interaction might play a role in nuclear import of the pre-integration complex. Interacts with human NUP153; this interaction might play a role in nuclear import of the pre-integration complex. Mg(2+) is required as a cofactor. Post-translationally, specific enzymatic cleavages by the viral protease yield mature proteins. The protease is released by autocatalytic cleavage. The polyprotein is cleaved during and after budding, this process is termed maturation. Proteolytic cleavage of p66 RT removes the RNase H domain to yield the p51 RT subunit. Nucleocapsid protein p7 might be further cleaved after virus entry. In terms of processing, tyrosine phosphorylated presumably in the virion by a host kinase. Phosphorylation is apparently not a major regulator of membrane association. Phosphorylated possibly by host MAPK1; this phosphorylation is necessary for Pin1-mediated virion uncoating. Post-translationally, methylated by host PRMT6, impairing its function by reducing RNA annealing and the initiation of reverse transcription.

It is found in the host cell membrane. It localises to the host endosome. The protein resides in the host multivesicular body. The protein localises to the virion membrane. Its subcellular location is the host nucleus. It is found in the host cytoplasm. It localises to the virion. It carries out the reaction Specific for a P1 residue that is hydrophobic, and P1' variable, but often Pro.. It catalyses the reaction Endohydrolysis of RNA in RNA/DNA hybrids. Three different cleavage modes: 1. sequence-specific internal cleavage of RNA. Human immunodeficiency virus type 1 and Moloney murine leukemia virus enzymes prefer to cleave the RNA strand one nucleotide away from the RNA-DNA junction. 2. RNA 5'-end directed cleavage 13-19 nucleotides from the RNA end. 3. DNA 3'-end directed cleavage 15-20 nucleotides away from the primer terminus.. The enzyme catalyses 3'-end directed exonucleolytic cleavage of viral RNA-DNA hybrid.. The catalysed reaction is DNA(n) + a 2'-deoxyribonucleoside 5'-triphosphate = DNA(n+1) + diphosphate. With respect to regulation, protease: The viral protease is inhibited by many synthetic protease inhibitors (PIs), such as amprenavir, atazanavir, indinavir, loprinavir, nelfinavir, ritonavir and saquinavir. Use of protease inhibitors in tritherapy regimens permit more ambitious therapeutic strategies. Reverse transcriptase/ribonuclease H: RT can be inhibited either by nucleoside RT inhibitors (NRTIs) or by non nucleoside RT inhibitors (NNRTIs). NRTIs act as chain terminators, whereas NNRTIs inhibit DNA polymerization by binding a small hydrophobic pocket near the RT active site and inducing an allosteric change in this region. Classical NRTIs are abacavir, adefovir (PMEA), didanosine (ddI), lamivudine (3TC), stavudine (d4T), tenofovir (PMPA), zalcitabine (ddC), and zidovudine (AZT). Classical NNRTIs are atevirdine (BHAP U-87201E), delavirdine, efavirenz (DMP-266), emivirine (I-EBU), and nevirapine (BI-RG-587). The tritherapies used as a basic effective treatment of AIDS associate two NRTIs and one NNRTI. In terms of biological role, mediates, with Gag polyprotein, the essential events in virion assembly, including binding the plasma membrane, making the protein-protein interactions necessary to create spherical particles, recruiting the viral Env proteins, and packaging the genomic RNA via direct interactions with the RNA packaging sequence (Psi). Gag-Pol polyprotein may regulate its own translation, by the binding genomic RNA in the 5'-UTR. At low concentration, the polyprotein would promote translation, whereas at high concentration, the polyprotein would encapsidate genomic RNA and then shut off translation. Functionally, targets the polyprotein to the plasma membrane via a multipartite membrane-binding signal, that includes its myristoylated N-terminus. Matrix protein is part of the pre-integration complex. Implicated in the release from host cell mediated by Vpu. Binds to RNA. Forms the conical core that encapsulates the genomic RNA-nucleocapsid complex in the virion. Most core are conical, with only 7% tubular. The core is constituted by capsid protein hexamer subunits. The core is disassembled soon after virion entry. Host restriction factors such as TRIM5-alpha or TRIMCyp bind retroviral capsids and cause premature capsid disassembly, leading to blocks in reverse transcription. Capsid restriction by TRIM5 is one of the factors which restricts HIV-1 to the human species. Host PIN1 apparently facilitates the virion uncoating. On the other hand, interactions with PDZD8 or CYPA stabilize the capsid. Its function is as follows. Encapsulates and protects viral dimeric unspliced genomic RNA (gRNA). Binds these RNAs through its zinc fingers. Acts as a nucleic acid chaperone which is involved in rearangement of nucleic acid secondary structure during gRNA retrotranscription. Also facilitates template switch leading to recombination. As part of the polyprotein, participates in gRNA dimerization, packaging, tRNA incorporation and virion assembly. In terms of biological role, aspartyl protease that mediates proteolytic cleavages of Gag and Gag-Pol polyproteins during or shortly after the release of the virion from the plasma membrane. Cleavages take place as an ordered, step-wise cascade to yield mature proteins. This process is called maturation. Displays maximal activity during the budding process just prior to particle release from the cell. Also cleaves Nef and Vif, probably concomitantly with viral structural proteins on maturation of virus particles. Hydrolyzes host EIF4GI and PABP1 in order to shut off the capped cellular mRNA translation. The resulting inhibition of cellular protein synthesis serves to ensure maximal viral gene expression and to evade host immune response. Also mediates cleavage of host YTHDF3. Mediates cleavage of host CARD8, thereby activating the CARD8 inflammasome, leading to the clearance of latent HIV-1 in patient CD4(+) T-cells after viral reactivation; in contrast, HIV-1 can evade CARD8-sensing when its protease remains inactive in infected cells prior to viral budding. Functionally, multifunctional enzyme that converts the viral RNA genome into dsDNA in the cytoplasm, shortly after virus entry into the cell. This enzyme displays a DNA polymerase activity that can copy either DNA or RNA templates, and a ribonuclease H (RNase H) activity that cleaves the RNA strand of RNA-DNA heteroduplexes in a partially processive 3' to 5' endonucleasic mode. Conversion of viral genomic RNA into dsDNA requires many steps. A tRNA(3)-Lys binds to the primer-binding site (PBS) situated at the 5'-end of the viral RNA. RT uses the 3' end of the tRNA primer to perform a short round of RNA-dependent minus-strand DNA synthesis. The reading proceeds through the U5 region and ends after the repeated (R) region which is present at both ends of viral RNA. The portion of the RNA-DNA heteroduplex is digested by the RNase H, resulting in a ssDNA product attached to the tRNA primer. This ssDNA/tRNA hybridizes with the identical R region situated at the 3' end of viral RNA. This template exchange, known as minus-strand DNA strong stop transfer, can be either intra- or intermolecular. RT uses the 3' end of this newly synthesized short ssDNA to perform the RNA-dependent minus-strand DNA synthesis of the whole template. RNase H digests the RNA template except for two polypurine tracts (PPTs) situated at the 5'-end and near the center of the genome. It is not clear if both polymerase and RNase H activities are simultaneous. RNase H probably can proceed both in a polymerase-dependent (RNA cut into small fragments by the same RT performing DNA synthesis) and a polymerase-independent mode (cleavage of remaining RNA fragments by free RTs). Secondly, RT performs DNA-directed plus-strand DNA synthesis using the PPTs that have not been removed by RNase H as primers. PPTs and tRNA primers are then removed by RNase H. The 3' and 5' ssDNA PBS regions hybridize to form a circular dsDNA intermediate. Strand displacement synthesis by RT to the PBS and PPT ends produces a blunt ended, linear dsDNA copy of the viral genome that includes long terminal repeats (LTRs) at both ends. Catalyzes viral DNA integration into the host chromosome, by performing a series of DNA cutting and joining reactions. This enzyme activity takes place after virion entry into a cell and reverse transcription of the RNA genome in dsDNA. The first step in the integration process is 3' processing. This step requires a complex comprising the viral genome, matrix protein, Vpr and integrase. This complex is called the pre-integration complex (PIC). The integrase protein removes 2 nucleotides from each 3' end of the viral DNA, leaving recessed CA OH's at the 3' ends. In the second step, the PIC enters cell nucleus. This process is mediated through integrase and Vpr proteins, and allows the virus to infect a non dividing cell. This ability to enter the nucleus is specific of lentiviruses, other retroviruses cannot and rely on cell division to access cell chromosomes. In the third step, termed strand transfer, the integrase protein joins the previously processed 3' ends to the 5' ends of strands of target cellular DNA at the site of integration. The 5'-ends are produced by integrase-catalyzed staggered cuts, 5 bp apart. A Y-shaped, gapped, recombination intermediate results, with the 5'-ends of the viral DNA strands and the 3' ends of target DNA strands remaining unjoined, flanking a gap of 5 bp. The last step is viral DNA integration into host chromosome. This involves host DNA repair synthesis in which the 5 bp gaps between the unjoined strands are filled in and then ligated. Since this process occurs at both cuts flanking the HIV genome, a 5 bp duplication of host DNA is produced at the ends of HIV-1 integration. Alternatively, Integrase may catalyze the excision of viral DNA just after strand transfer, this is termed disintegration. This is Gag-Pol polyprotein (gag-pol) from Human immunodeficiency virus type 1 group M subtype B (isolate JRCSF) (HIV-1).